The chain runs to 548 residues: Chaperonin GroEL (548 aa).

ATP is bound by residues 30 to 33 (TLGP), K51, 87 to 91 (DGTTT), G415, 478 to 480 (NAA), and D494.

The protein belongs to the chaperonin (HSP60) family. In terms of assembly, forms a cylinder of 14 subunits composed of two heptameric rings stacked back-to-back. Interacts with the co-chaperonin GroES.

The protein resides in the cytoplasm. The enzyme catalyses ATP + H2O + a folded polypeptide = ADP + phosphate + an unfolded polypeptide.. Functionally, together with its co-chaperonin GroES, plays an essential role in assisting protein folding. The GroEL-GroES system forms a nano-cage that allows encapsulation of the non-native substrate proteins and provides a physical environment optimized to promote and accelerate protein folding. The sequence is that of Chaperonin GroEL from Trichlorobacter lovleyi (strain ATCC BAA-1151 / DSM 17278 / SZ) (Geobacter lovleyi).